Consider the following 627-residue polypeptide: Glucokinase regulatory protein (627 aa).

2 consecutive SIS domains span residues 90–286 and 320–499; these read VQEV…QGVV and VGIS…LLGK. Beta-D-fructose 1-phosphate is bound by residues 109–110, Glu-153, and 179–181; these read TS and SVG. 109–110 contacts beta-D-fructose 6-phosphate; that stretch reads TS. 179–181 lines the beta-D-fructose 6-phosphate pocket; that stretch reads SVG. The important for interaction with GCK stretch occupies residues 199-200; it reads AV. Position 348 (Glu-348) interacts with beta-D-fructose 1-phosphate. Residues 463-465 form an essential for interaction with GCK region; that stretch reads LLF. Lys-514 contributes to the beta-D-fructose 1-phosphate binding site. Lys-514 is a beta-D-fructose 6-phosphate binding site.

Belongs to the GCKR family. Interacts (fructose 6-phosphate bound form) with GCK. Detected in liver (at protein level). Not detected in muscle, brain, heart, testis, intestine or spleen.

It is found in the cytoplasm. It localises to the nucleus. The protein resides in the mitochondrion. Functionally, regulates glucokinase (GCK) by forming an inactive complex with this enzyme. Acts by promoting GCK recruitment to the nucleus, possibly to provide a reserve of GCK that can be quickly released in the cytoplasm after a meal. The affinity of GCKR for GCK is modulated by fructose metabolites: GCKR with bound fructose 6-phosphate has increased affinity for GCK, while GCKR with bound fructose 1-phosphate has strongly decreased affinity for GCK and does not inhibit GCK activity. In Rattus norvegicus (Rat), this protein is Glucokinase regulatory protein.